A 326-amino-acid polypeptide reads, in one-letter code: tRNA-modifying protein YgfZ (326 aa).

Tryptophan 27 and tryptophan 189 together coordinate folate.

This sequence belongs to the tRNA-modifying YgfZ family.

Its subcellular location is the cytoplasm. Folate-binding protein involved in regulating the level of ATP-DnaA and in the modification of some tRNAs. It is probably a key factor in regulatory networks that act via tRNA modification, such as initiation of chromosomal replication. This chain is tRNA-modifying protein YgfZ, found in Shigella boydii serotype 4 (strain Sb227).